The following is a 378-amino-acid chain: Stimulator of interferon genes protein (378 aa).

Topologically, residues 1-17 are cytoplasmic; the sequence is MPYSSLHPSIPQPRGLR. The tract at residues 1-190 is mediates interaction with ZDHHC1 and ZDHHC11; the sequence is MPYSSLHPSI…AYNQRHKNVL (190 aa). The chain crosses the membrane as a helical span at residues 18–34; it reads AQVAALVLLGACLVALW. The Lumenal segment spans residues 35 to 44; sequence GLGELPEYTL. The helical transmembrane segment at 45 to 69 threads the bilayer; it reads RWLVLHLASQQIGLLVKGLCSLAEE. Over 70-91 the chain is Cytoplasmic; that stretch reads LCHVHSRYQSSYWRAARACLGC. Residues cysteine 88 and cysteine 91 are each lipidated (S-palmitoyl cysteine). Residues 92–106 traverse the membrane as a helical segment; that stretch reads PIRCGALLLLSCYFY. At 107-116 the chain is on the lumenal side; sequence FSIRDKAGLP. Residues 117–134 traverse the membrane as a helical segment; the sequence is LPWMLALLGLSQALNILL. The Cytoplasmic portion of the chain corresponds to 135–378; sequence GLQHLAPAEV…QPLPLRSDIF (244 aa). A Glycyl lysine isopeptide (Lys-Gly) (interchain with G-Cter in ubiquitin) cross-link involves residue lysine 150. The interval 153-339 is cyclic dinucleotide-binding domain (CBD); sequence FNVAHGLAWS…LRHLRQEERE (187 aa). 2',3'-cGAMP contacts are provided by serine 162 and tyrosine 167. Serine 162 and tyrosine 167 together coordinate 3',3'-c-di-GMP. A 2',3'-cUAMP-binding site is contributed by tyrosine 167. Lysine 236 participates in a covalent cross-link: Glycyl lysine isopeptide (Lys-Gly) (interchain with G-Cter in ubiquitin). Arginine 238 and threonine 263 together coordinate 2',3'-cGAMP. 2 residues coordinate 2',3'-cUAMP: arginine 238 and threonine 263. 3',3'-c-di-GMP contacts are provided by residues 238–241 and threonine 263; that span reads RVYT. The segment at 339–378 is C-terminal tail (CTT); it reads EVTMGSAETSVVPTSSTLSQEPELLISGMEQPLPLRSDIF. The residue at position 354 (serine 354) is a Phosphoserine. Phosphothreonine is present on threonine 355. Phosphoserine; by TBK1 occurs at positions 357 and 365. The short motif at 362–365 is the pLxIS motif element; the sequence is LLIS.

Belongs to the STING family. As to quaternary structure, homodimer; forms a homodimer in absence of cyclic nucleotide (c-di-GMP or cGAMP); 'Lys-63'-linked ubiquitination at Lys-150 is required for homodimerization. Homotetramer; in presence of cyclic nucleotide (c-di-GMP or cGAMP), forms tetramers and higher-order oligomers through side-by-side packing. Interacts (when phosphorylated) with IRF3; following activation and phosphorylation on the pLxIS motif by TBK1, recruits IRF3. Interacts with DDX58/RIG-I, MAVS and SSR2. Interacts with RNF5 and TRIM56. Interacts with TBK1; when homodimer, leading to subsequent production of IFN-beta. Interacts with IFIT1 and IFIT2. Interacts with TRIM29; this interaction induces STING1 ubiquitination and subsequent degradation. Associates with the MHC-II complex. Interacts with STEEP1; interaction takes place upon cGAMP-activation and STING1 phosphorylation by MAP3K7/TAK1 and promotes STING1 translocation to COPII vesicles. Interacts with SEC24A, SEC24B and SEC24C; promoting translocation to COPII vesicles. Interacts (when ubiquitinated) with SQSTM1; leading to relocalization to autophagosomes. Interacts with SURF4. Interacts with HNRNPA2B1. Interacts with ZDHHC1; ZDHHC1 constitutively interacts with STING1 and in presence of DNA viruses activates it by promoting its cGAMP-induced oligomerization and the recruitment of downstream signaling components. Interacts with ZDHHC11; in presence of DNA viruses promotes the recruitment of IRF3 to STING1. Interacts with TOMM70. Interacts with TAB1; promoting recruitment of TAB1 to the endoplasmic reticulum membrane and subsequent activation of MAP3K7/TAK1. Interacts (via transmembrane domain) with TMEM203. Interacts with DDX41. (Microbial infection) Interacts with African swine fever virus/ASFV protein A528R; this interaction mediates STING1 degradation. In terms of assembly, (Microbial infection) Interacts with African swine fever virus/ASFV minor capsid protein p17. As to quaternary structure, (Microbial infection) Interacts with Pseudorabies virus protein UL13; this interaction mediates STING1 degradation in a RNF5-dependent manner. Phosphorylation by TBK1 leads to activation and production of IFN-beta. Following cyclic nucleotide (c-di-GMP or cGAMP)-binding, activation and translocation from the endoplasmic reticulum, STING1 is phosphorylated by TBK1 at Ser-365 in the pLxIS motif. The phosphorylated pLxIS motif constitutes an IRF3-binding motif, leading to recruitment of the transcription factor IRF3 to induce type-I interferons and other cytokines. Phosphorylated on tyrosine residues upon MHC-II aggregation. Dephosphorylation by PPP6C leads to inactivation and decreased production of IFN-beta. Phosphorylation at Ser-357 is also required to activate IRF3. Phosphorylation at Ser-354 by MAP3K7/TAK1 facilitates its interaction with STEEP1, promoting STING1 translocation to COPII vesicles. In terms of processing, ubiquitinated. Ubiquitinated via 'Lys-63'-linked ubiquitin chains in response to double-stranded DNA treatment, leading to relocalization to autophagosomes and subsequent degradation; this process is dependent on SQSTM1. 'Lys-63'-linked ubiquitination mediated by TRIM56 at Lys-150 promotes homodimerization and recruitment of the antiviral kinase TBK1 and subsequent production of IFN-beta. 'Lys-48'-linked polyubiquitination at Lys-150 occurring after viral infection is mediated by RNF5 and leads to proteasomal degradation. 'Lys-11'-linked polyubiquitination at Lys-150 by RNF26 leads to stabilize STING1: it protects STING1 from RNF5-mediated 'Lys-48'-linked polyubiquitination. 'Lys-33'-linked and 'Lys-48'-linked deubiquitinated by USP20; leading to its stabilization and promotion of innate antiviral response. 'Lys-48'-linked deubiquitinated by USP44; leading to its stabilization and promotion of innate antiviral response. Deubiquitinated by USP13; leading to inhibition of innate antiviral response. 'Lys-63'-linked deubiquitinated by USP49; leading to inhibition of the subsequent recruitment of TBK1 to the signaling complex. 'Lys-63'-linked ubiquitination mediated by RNF39 promotes the activation of the cGAS-STING pathway. Post-translationally, palmitoylation takes place in the Golgi apparatus and creates a platform for the recruitment of TBK1. In terms of tissue distribution, expressed at higher level in the spleen, lymph node, lung and bone marrow, followed by the small intestine, heart, liver and brain, and to a lesser extent in the stomach and kidney.

The protein resides in the endoplasmic reticulum membrane. It localises to the cytoplasm. The protein localises to the perinuclear region. It is found in the endoplasmic reticulum-Golgi intermediate compartment membrane. Its subcellular location is the golgi apparatus membrane. The protein resides in the cytoplasmic vesicle. It localises to the autophagosome membrane. The protein localises to the mitochondrion outer membrane. It is found in the cell membrane. The enzyme catalyses H(+)(in) = H(+)(out). In terms of biological role, facilitator of innate immune signaling that acts as a sensor of cytosolic DNA from bacteria and viruses and promotes the production of type I interferon (IFN-alpha and IFN-beta). Innate immune response is triggered in response to non-CpG double-stranded DNA from viruses and bacteria delivered to the cytoplasm. Acts by binding cyclic dinucleotides: recognizes and binds cyclic di-GMP (c-di-GMP), a second messenger produced by bacteria, cyclic UMP-AMP (2',3'-cUAMP), and cyclic GMP-AMP (cGAMP), a messenger produced by CGAS in response to DNA virus in the cytosol. Upon binding to c-di-GMP, cUAMP or cGAMP, STING1 oligomerizes, translocates from the endoplasmic reticulum and is phosphorylated by TBK1 on the pLxIS motif, leading to recruitment and subsequent activation of the transcription factor IRF3 to induce expression of type I interferon and exert a potent anti-viral state. Exhibits 2',3' phosphodiester linkage-specific ligand recognition: can bind both 2'-3' linked cGAMP (2'-3'-cGAMP) and 3'-3' linked cGAMP but is preferentially activated by 2'-3' linked cGAMP. The preference for 2'-3'-cGAMP, compared to other linkage isomers is probably due to the ligand itself, whichs adopts an organized free-ligand conformation that resembles the STING1-bound conformation and pays low energy costs in changing into the active conformation. In addition to promote the production of type I interferons, plays a direct role in autophagy. Following cGAMP-binding, STING1 buds from the endoplasmic reticulum into COPII vesicles, which then form the endoplasmic reticulum-Golgi intermediate compartment (ERGIC). The ERGIC serves as the membrane source for WIPI2 recruitment and LC3 lipidation, leading to formation of autophagosomes that target cytosolic DNA or DNA viruses for degradation by the lysosome. Promotes autophagy by acting as a proton channel that directs proton efflux from the Golgi to facilitate MAP1LC3B/LC3B lipidation. The autophagy- and interferon-inducing activities can be uncoupled and autophagy induction is independent of TBK1 phosphorylation. Autophagy is also triggered upon infection by bacteria: following c-di-GMP-binding, which is produced by live Gram-positive bacteria, promotes reticulophagy. May be involved in translocon function, the translocon possibly being able to influence the induction of type I interferons. May be involved in transduction of apoptotic signals via its association with the major histocompatibility complex class II (MHC-II). The chain is Stimulator of interferon genes protein from Sus scrofa (Pig).